A 141-amino-acid polypeptide reads, in one-letter code: Arsenate reductase (141 aa).

Cys12 serves as the catalytic Nucleophile; cysteine thioarsenate intermediate.

This sequence belongs to the ArsC family.

It catalyses the reaction [glutaredoxin]-dithiol + arsenate + glutathione + H(+) = glutathionyl-S-S-[glutaredoxin] + arsenite + H2O. In terms of biological role, involved in resistance to arsenate. Catalyzes the reduction of arsenate [As(V)] to arsenite [As(III)]. In Escherichia coli, this protein is Arsenate reductase.